Here is a 403-residue protein sequence, read N- to C-terminus: D-mannonate dehydratase CC0532 (403 aa).

The substrate site is built by Asn-38 and His-123. Tyr-160 serves as the catalytic Proton donor/acceptor. Asp-211 contributes to the Mg(2+) binding site. Residue His-213 is the Proton donor/acceptor of the active site. Positions 237 and 263 each coordinate Mg(2+). Substrate is bound by residues Glu-263, Arg-284, His-313, Asp-317, and Glu-340.

It belongs to the mandelate racemase/muconate lactonizing enzyme family. GalD subfamily. The cofactor is Mg(2+).

It catalyses the reaction D-mannonate = 2-dehydro-3-deoxy-D-gluconate + H2O. The protein operates within carbohydrate metabolism; pentose and glucuronate interconversion. In terms of biological role, catalyzes the dehydration of D-mannonate. Has no detectable activity with a panel of 70 other acid sugars (in vitro). This chain is D-mannonate dehydratase CC0532, found in Caulobacter vibrioides (strain ATCC 19089 / CIP 103742 / CB 15) (Caulobacter crescentus).